Consider the following 501-residue polypeptide: TNF receptor-associated factor 2 (501 aa).

The residue at position 2 (A2) is an N-acetylalanine. Phosphoserine is present on S5. T7 carries the post-translational modification Phosphothreonine. Position 11 is a phosphoserine (S11). Residue T22 is modified to Phosphothreonine. A Glycyl lysine isopeptide (Lys-Gly) (interchain with G-Cter in ubiquitin) cross-link involves residue K31. An RING-type zinc finger spans residues 34–73 (CSACKNILRRPFQAQCGHRYCSFCLTSILSSGPQNCAACV). Residue T117 is modified to Phosphothreonine; by PKC. 2 consecutive TRAF-type zinc fingers follow at residues 124–180 (CHEG…VHYE) and 177–233 (VHYE…ENLQ). Positions 283-293 (ENIVCVLNREV) are important for interaction with BIRC2 and BIRC3. The stretch at 298–348 (VTAEACSRQHRLDQDKIEALSNKVQQLERSIGLKDLAMADLEQKVSELEVS) forms a coiled coil. K320 participates in a covalent cross-link: Glycyl lysine isopeptide (Lys-Gly) (interchain with G-Cter in ubiquitin). Positions 351–496 (DGVFIWKISD…DDAIFIKAIV (146 aa)) constitute an MATH domain.

The protein belongs to the TNF receptor-associated factor family. A subfamily. As to quaternary structure, homotrimer. Heterotrimer with TRAF1. Heterotrimer with TRAF3 (via TRAF domain). The domain containing the RING-type and the first TRAF-type zinc finger can also form homodimers (in vitro). Interacts with TNFRSF1B/TNFR2. Interacts with TNFRSF5/CD40. Interacts with TNFRSF4, TNFRSF7/CD27, TNFRSF8/CD30, TNFRSF9/CD137, TNFRSF11A/RANK, TNFRSF13B/TACI, TNFRSF14, TNFRSF16/NGFR, TNFRSF17/BCMA, TNFRSF18/AITR, TNFRSF19/TROY, TNFRSF19L/RELT and EDAR. Stimulation of TNF-alpha receptor TNFRSF1A leads to the formation of two distinct signaling complexes. Plasma membrane-bound complex I is composed of TNFRSF1A, TRADD, RIPK1, TRAF2 and BIRC2/c-IAP1 or BIRC3 which interacts with CHUCK/IKK-alpha, IKBKB/IKK-beta and IKBKG/IKK-gamma promoting cell survival. Subsequently, TRADD, RIPK1 and TRAF2 dissociate from TNFRSF1A and form cytoplasmic complex II with FADD and caspase CASP8 promoting cell apoptosis. Interacts with TRADD. Identified in a complex with TNFRSF1A, RIPK1 and IKBKB/IKK-beta. Interacts with RIPK2. Interacts with BIRC2 and BIRC3 N-terminus; a single BIRC2 or BIRC3 molecule interacts with a heterotrimer formed by TRAF1 and TRAF2, or a TRAF2 homotrimer. Identified in a complex composed of TRAF2, TRAF3, BIRC2 and BIRC3. Interacts with BIRC2; the interaction promotes BIRC2 stability. Interaction with BIRC2 and/or BIRC3 is essential for ubiquitination of IKBKE, degradation of NFKBIA and activation of NF-kappa-B. Within complex I, phosphorylated TRAF2 interacts (via 'Lys-63'-linked polyubiquitin chains) with CHUCK/IKK-alpha, IKBKB/IKK-beta, IKBKG/IKK-gamma TAB2, TAB3 and TAK1 in response to TNF-alpha stimulation. Within complex I, interacts with UXT isoform 1 (via TPQE motif); the interaction prevents the recruitment of FADD and CASP8/caspase 8 to complex I. Forms a complex composed of TNFRSF8/CD30 or TNFRSF1B/TNFR2, and TRAF1, TRAF2 and E3 ligase TRAIP. Within the complex, interacts with TRAIP; the interaction inhibits TRAF2-mediated NF-kappa B activation. Component of a complex composed of TANK and TBK1. Interacts with TRPC4AP. Interacts with MAP3K1/MEKK1, MAP3K5/ASK1 and MAP3K11/MLK3 in response to TNF-alpha stimulation; the interaction leads to JNK activation and interaction with MAP3K5 is inhibited by PRMT1. Component of a complex composed of MAP3K14/NIK BIRC3 and TRAF3; the interaction leads to BIRC2/3-mediated ubiquitination of TRAF3 upon CD40 engagement in a TRAF2-dependent manner. Interacts with MAP3K14/NIK in response to TNF-alpha stimulation; the interaction leads to NF-kappa B activation. Interacts with PEG3; the interaction may promote TRAF2-mediated NF-kappa B activation. Interacts with HIVEP3; the interaction may inhibit TNF-alpha-TRAF2-mediated NF-kappa B and JNK activation. Interacts with TANK/ITRAF; the interaction prevents interaction between TNFRSF1B/TNFR2 and TRAF2. Interacts with deubiquitinating enzyme CYLD; the interaction results in the deubiquitination and inactivation of TRAF2. Interacts with SIAH2; the interaction leads to TRAF2 ubiquitination and degradation. Interacts with E2 conjugating enzyme UBE2N/Ubc13, E3 ligase ITCH and RNF11 in response to TNF-alpha stimulation. Interacts with ubiquitin-editing enzyme TNFAIP3/A20 in response to TNF-alpha stimulation; the interaction promotes TRAF2 dissociation from UBE2N/Ubc13, ITCH, RNF11 and TAX1BP1 and prevents prolonged TRAF-2 ubiquitination. Interacts with TAX1BP1 in response to TNF-alpha stimulation; the interaction promotes TRAF2 dissociation from UBE2N/Ubc13 and TNFAIP3/A20, and prevents prolonged TRAF-2 ubiquitination. Interacts (via C-terminus) with EIF2AK2/PKR (via the kinase catalytic domain). Interacts with deubiquitinating enzyme USP48. Interacts with PTPN2; probably involved in TNF-mediated signaling. Interacts with Toll-like receptor TLR4/3 adapter TICAM1/TRIF; the interaction may promote TICAM1 ubiquitination. Interacts with kinase/endoribonuclease ERN1/IRE1 and DAB2IP in response to ER stress; the interaction requires DAB2IP. Interacts with ERN1/IRE1 and TAOK3 in response to ER stress; the interaction may promote TRAF2 phosphorylation. Interacts (via zinc fingers) with DAB2IP (via C-terminus PER domain) in response to TNF-alpha stimulation. Interacts with CASP8AP2/FLASH. Interacts with NFATC2IP; the interaction may repress IL-4 production in T cells. Interacts with kinase CDK9. Interacts with sphingosine kinase 1 SPHK1. Interacts with kinase TNIK. Interacts with TRAFD1. Interacts with DNA phosphodiesterase TDP2. Interacts with MAVS/IPS1. Interacts with CARD14. Interacts with GPS2. Interacts with XPNPEP3. Interacts with RIPK3. Interacts with RELL2. Interacts with LRRC19. Interacts with GAPDH; promoting TRAF2 ubiquitination. Phosphorylated at several serine residues within the first 128 amino acid residues. Phosphorylated at Thr-117 in response to signaling via TNF and TNFRSF1A. Phosphorylation at Thr-117 is required for 'Lys-63'-linked polyubiquitination, but not for 'Lys-48'-linked polyubiquitination. Phosphorylation at Thr-117 is important for interaction with IKKA and IKKB, activation of IKK and subsequent activation of NF-kappa-B. Post-translationally, undergoes both 'Lys-48'-linked and 'Lys-63'-linked polyubiquitination. Polyubiquitinated via 'Lys-63'-linked ubiquitin in response to TNF signaling; this requires prior phosphorylation at Thr-117. 'Lys-63'-linked polyubiquitination promotes TRAF2-mediated activation of NF-kappa-B. Can be polyubiquitinated at several Lys residues via 'Lys-48'-linked ubiquitin chains in response to TNF signaling, leading to proteasomal degradation. Autoubiquitinated, leading to its subsequent proteasomal degradation. Polyubiquitinated by BIRC2 and SIAH2, leading to its subsequent proteasomal degradation. Not ubiquitinated by BIRC3 or SIAH1. Deubiquitinated by CYLD, a protease that specifically cleaves 'Lys-63'-linked polyubiquitin chains. Ubiquination is inhibited by LRRC19; inhiits proteasomal degradation. Ubiquitinated at Lys-320 by the SCF(FBXL2) complex, leading to its degradation by the proteasome. Ubiquitinated by E3 ubiquitin-protein ligase complex containing FBXO7; leading to repression of NF-kappa-B signaling. In terms of tissue distribution, isoform 1 and isoform 2 are expressed in spleen, adipose tissues, skeletal muscles, thymus, testis, heart, lung, brain. Isoform 2 is very weakly expressed in heart, lung and brain.

Its subcellular location is the cytoplasm. The catalysed reaction is S-ubiquitinyl-[E2 ubiquitin-conjugating enzyme]-L-cysteine + [acceptor protein]-L-lysine = [E2 ubiquitin-conjugating enzyme]-L-cysteine + N(6)-ubiquitinyl-[acceptor protein]-L-lysine.. It functions in the pathway protein modification; protein ubiquitination. Its activity is regulated as follows. Has very low E3 ubiquitin ligase activity in the absence of sphingosine-1-phosphate. E3 ubiquitin ligase activity is strongly activated by cytoplasmic sphingosine-1-phosphate. Its function is as follows. E3 ubiquitin-protein ligase that regulates activation of NF-kappa-B and JNK and plays a central role in the regulation of cell survival and apoptosis. Catalyzes 'Lys-63'-linked ubiquitination of target proteins, such as BIRC3, IKBKE, MLST8, RIPK1 and TICAM1. Is an essential constituent of several E3 ubiquitin-protein ligase complexes, where it promotes the ubiquitination of target proteins by bringing them into contact with other E3 ubiquitin ligases. Regulates BIRC2 and BIRC3 protein levels by inhibiting their autoubiquitination and subsequent degradation; this does not depend on the TRAF2 RING-type zinc finger domain. Plays a role in mediating activation of NF-kappa-B by EIF2AK2/PKR. In complex with BIRC2 or BIRC3, promotes ubiquitination of IKBKE. Acts as a regulator of mTORC1 and mTORC2 assembly by mediating 'Lys-63'-linked ubiquitination of MLST8, thereby inhibiting formation of the mTORC2 complex, while facilitating assembly of the mTORC1 complex. Required for normal antibody isotype switching from IgM to IgG. In Mus musculus (Mouse), this protein is TNF receptor-associated factor 2 (Traf2).